Reading from the N-terminus, the 910-residue chain is Leucine--tRNA ligase (910 aa).

Residues 42-52 carry the 'HIGH' region motif; sequence PYPSGKLHMGH. The short motif at 668-672 is the 'KMSKS' region element; the sequence is KMSKS. Residue Lys671 participates in ATP binding.

This sequence belongs to the class-I aminoacyl-tRNA synthetase family.

The protein localises to the cytoplasm. It carries out the reaction tRNA(Leu) + L-leucine + ATP = L-leucyl-tRNA(Leu) + AMP + diphosphate. The chain is Leucine--tRNA ligase from Neisseria meningitidis serogroup A / serotype 4A (strain DSM 15465 / Z2491).